A 145-amino-acid chain; its full sequence is Protein BUD31 homolog 1 (145 aa).

It belongs to the BUD31 (G10) family.

The protein localises to the nucleus. In Oryza sativa subsp. japonica (Rice), this protein is Protein BUD31 homolog 1.